Consider the following 364-residue polypeptide: UDP-N-acetylglucosamine--N-acetylmuramyl-(pentapeptide) pyrophosphoryl-undecaprenol N-acetylglucosamine transferase (364 aa).

UDP-N-acetyl-alpha-D-glucosamine is bound by residues 10–12 (TGG), asparagine 124, arginine 165, serine 193, isoleucine 248, and glutamine 293.

Belongs to the glycosyltransferase 28 family. MurG subfamily.

It localises to the cell inner membrane. The enzyme catalyses di-trans,octa-cis-undecaprenyl diphospho-N-acetyl-alpha-D-muramoyl-L-alanyl-D-glutamyl-meso-2,6-diaminopimeloyl-D-alanyl-D-alanine + UDP-N-acetyl-alpha-D-glucosamine = di-trans,octa-cis-undecaprenyl diphospho-[N-acetyl-alpha-D-glucosaminyl-(1-&gt;4)]-N-acetyl-alpha-D-muramoyl-L-alanyl-D-glutamyl-meso-2,6-diaminopimeloyl-D-alanyl-D-alanine + UDP + H(+). Its pathway is cell wall biogenesis; peptidoglycan biosynthesis. In terms of biological role, cell wall formation. Catalyzes the transfer of a GlcNAc subunit on undecaprenyl-pyrophosphoryl-MurNAc-pentapeptide (lipid intermediate I) to form undecaprenyl-pyrophosphoryl-MurNAc-(pentapeptide)GlcNAc (lipid intermediate II). The protein is UDP-N-acetylglucosamine--N-acetylmuramyl-(pentapeptide) pyrophosphoryl-undecaprenol N-acetylglucosamine transferase of Geobacter sulfurreducens (strain ATCC 51573 / DSM 12127 / PCA).